The following is a 688-amino-acid chain: Polyribonucleotide nucleotidyltransferase (688 aa).

Mg(2+) contacts are provided by aspartate 484 and aspartate 490. The KH domain maps to proline 550 to isoleucine 609. In terms of domain architecture, S1 motif spans aspartate 626 to alanine 688.

It belongs to the polyribonucleotide nucleotidyltransferase family. Requires Mg(2+) as cofactor.

Its subcellular location is the cytoplasm. It carries out the reaction RNA(n+1) + phosphate = RNA(n) + a ribonucleoside 5'-diphosphate. In terms of biological role, involved in mRNA degradation. Catalyzes the phosphorolysis of single-stranded polyribonucleotides processively in the 3'- to 5'-direction. In Helicobacter pylori (strain G27), this protein is Polyribonucleotide nucleotidyltransferase.